The following is a 97-amino-acid chain: Protein RnfH (97 aa).

Belongs to the UPF0125 (RnfH) family.

This is Protein RnfH from Aliivibrio salmonicida (strain LFI1238) (Vibrio salmonicida (strain LFI1238)).